The primary structure comprises 466 residues: F-box/WD repeat-containing protein 15 (466 aa).

Positions 1-45 (MAIHLPCLPMMKILSYLDAYSLLQAAQVNKDWNELASSDVLWRKL) constitute an F-box domain. WD repeat units lie at residues 101–143 (GYAC…ITWK), 146–185 (EQPASIKLLTTLPEMHIAVTVDIQSTIKLWDCHNREALAT), 187–228 (NLKS…LIST), 339–379 (LQCH…KTFQ), and 381–419 (CPEMIVKLSVDPLHVIVICNTGSMDVYAWEERSLLLRKC).

Part of an SCF (SKP1-CUL1-F-box protein) E3 ubiquitin-protein ligase complex. Interacts with KAT7 and SKP1. In terms of tissue distribution, specifically expressed in oocytes from follicles of the medullary region of the ovary.

It localises to the cytoplasm. The protein resides in the cytosol. The protein localises to the endoplasmic reticulum. It is found in the nucleus. It functions in the pathway protein modification; protein ubiquitination. Its function is as follows. Substrate-recognition component of an SCF (SKP1-CUL1-F-box protein)-type E3 ubiquitin ligase complex. Promotes KAT7 ubiquitination and subsequent degradation in collaboration with MAP2K1 kinase, leading to reduced histone H3K14 acetylation and increased cell proliferation. The polypeptide is F-box/WD repeat-containing protein 15 (Mus musculus (Mouse)).